Here is a 112-residue protein sequence, read N- to C-terminus: Large ribosomal subunit protein eL30y (112 aa).

The protein belongs to the eukaryotic ribosomal protein eL30 family.

The polypeptide is Large ribosomal subunit protein eL30y (RPL30B) (Arabidopsis thaliana (Mouse-ear cress)).